The primary structure comprises 60 residues: UPF0434 protein NMCC_0628 (60 aa).

The protein belongs to the UPF0434 family.

In Neisseria meningitidis serogroup C (strain 053442), this protein is UPF0434 protein NMCC_0628.